The chain runs to 259 residues: MTTAARPTFDPARGGSGRGEKDLSALSKQYSSRDLPGHTKLKYRETGQGTSDENRNRDFRKELEEREREARSGTGATSSSSGKALPSIVRKAIEANNAGGGSSAAKRSKPDAGQQQAQQAAQQQAANMDADEPLDNDSSDSDSDSDDDDAALLAELQKIKQERLQETARRESEKKQEDERIRMENILSGNPLMNYEPGTAASAAGRASGLGGDLKIKRRWDDDVVFKNCARSAPDKKTHFVNDALRSDFHKKFMDKYIK.

The interval 1 to 182 is disordered; the sequence is MTTAARPTFD…EKKQEDERIR (182 aa). Over residues 52–71 the composition is skewed to basic and acidic residues; it reads DENRNRDFRKELEEREREAR. 2 stretches are compositionally biased toward low complexity: residues 72 to 82 and 114 to 126; these read SGTGATSSSSG and QQQA…QQAA. Over residues 129–150 the composition is skewed to acidic residues; that stretch reads DADEPLDNDSSDSDSDSDDDDA. A coiled-coil region spans residues 150-182; sequence AALLAELQKIKQERLQETARRESEKKQEDERIR. Basic and acidic residues predominate over residues 157 to 182; that stretch reads QKIKQERLQETARRESEKKQEDERIR.

It belongs to the CWC15 family.

Involved in pre-mRNA splicing. The protein is Protein CWC15 homolog (c12.1) of Drosophila melanogaster (Fruit fly).